A 266-amino-acid polypeptide reads, in one-letter code: Undecaprenyl-diphosphatase (266 aa).

Helical transmembrane passes span 41 to 61 (YAYS…LIYF), 82 to 102 (LVYI…LYYV), 106 to 126 (WLVV…AVVL), 159 to 179 (AVSV…LLLL), 191 to 211 (FVLV…SEGG), 213 to 233 (VATA…IITI), and 246 to 266 (VLVN…RIIF).

This sequence belongs to the UppP family.

The protein resides in the cell membrane. The catalysed reaction is di-trans,octa-cis-undecaprenyl diphosphate + H2O = di-trans,octa-cis-undecaprenyl phosphate + phosphate + H(+). Catalyzes the dephosphorylation of undecaprenyl diphosphate (UPP). The polypeptide is Undecaprenyl-diphosphatase (Pyrobaculum aerophilum (strain ATCC 51768 / DSM 7523 / JCM 9630 / CIP 104966 / NBRC 100827 / IM2)).